The primary structure comprises 365 residues: Sulfate/thiosulfate import ATP-binding protein CysA (365 aa).

The ABC transporter domain maps to 3–237 (IEIANIKKSF…PATRFVLEFM (235 aa)). 35 to 42 (GPSGSGKT) lines the ATP pocket.

The protein belongs to the ABC transporter superfamily. Sulfate/tungstate importer (TC 3.A.1.6) family. As to quaternary structure, the complex is composed of two ATP-binding proteins (CysA), two transmembrane proteins (CysT and CysW) and a solute-binding protein (CysP).

It localises to the cell inner membrane. It catalyses the reaction sulfate(out) + ATP + H2O = sulfate(in) + ADP + phosphate + H(+). The enzyme catalyses thiosulfate(out) + ATP + H2O = thiosulfate(in) + ADP + phosphate + H(+). Its function is as follows. Part of the ABC transporter complex CysAWTP involved in sulfate/thiosulfate import. Responsible for energy coupling to the transport system. This Escherichia coli (strain K12) protein is Sulfate/thiosulfate import ATP-binding protein CysA.